Here is a 227-residue protein sequence, read N- to C-terminus: Orotidine 5'-phosphate decarboxylase (227 aa).

Residues D8, K30, 59–68 (DLKLYDIPNT), T118, R178, Q187, G207, and R208 each bind substrate. The active-site Proton donor is K61.

The protein belongs to the OMP decarboxylase family. Type 1 subfamily. In terms of assembly, homodimer.

It carries out the reaction orotidine 5'-phosphate + H(+) = UMP + CO2. The protein operates within pyrimidine metabolism; UMP biosynthesis via de novo pathway; UMP from orotate: step 2/2. Catalyzes the decarboxylation of orotidine 5'-monophosphate (OMP) to uridine 5'-monophosphate (UMP). The sequence is that of Orotidine 5'-phosphate decarboxylase from Nitratiruptor sp. (strain SB155-2).